The sequence spans 226 residues: Protein pdh1 (226 aa).

Residues 1-26 (MNHFSKFSVTKRLLILEVLFSAISFG) form the signal peptide. Over 27 to 41 (ISIYIKVFGRSSIVT) the chain is Extracellular. Residues 42-62 (FFLLCFHLVPNALFLFPWTII) traverse the membrane as a helical segment. Residues 63 to 65 (TTS) lie on the Cytoplasmic side of the membrane. The helical transmembrane segment at 66–86 (FVDANVFTLLSSILILSVYGV) threads the bilayer. The Extracellular segment spans residues 87–97 (EIERSWGHKEY). The helical transmembrane segment at 98 to 118 (LLFCQFLTVIPNIAVLIPCFI) threads the bilayer. The Cytoplasmic portion of the chain corresponds to 119–191 (AYKITDSHYL…VFQSFPWTYF (73 aa)). The chain crosses the membrane as a helical span at residues 192 to 212 (CLAVSGTCISELYVLFVHPVV). The Extracellular segment spans residues 213–226 (QELFHLESHTQLPI).

The protein resides in the membrane. The protein is Protein pdh1 (pdh1) of Schizosaccharomyces pombe (strain 972 / ATCC 24843) (Fission yeast).